Consider the following 136-residue polypeptide: Protein PsiE homolog (136 aa).

4 helical membrane-spanning segments follow: residues 15-35 (AMQTVLNLGLLCLGIILIVFL), 58-78 (VEGLVVYFLYFEFIALIVKYF), 83-103 (HFPLRYFVYIGITAIVRLIII), and 108-128 (PMAVLIYSAAILILVITLWLC).

It belongs to the PsiE family.

The protein localises to the cell inner membrane. In Klebsiella pneumoniae (strain 342), this protein is Protein PsiE homolog.